The chain runs to 180 residues: NAD(P)H-quinone oxidoreductase subunit I, chloroplastic (180 aa).

4Fe-4S ferredoxin-type domains lie at 55-84 (GRIH…VDWK) and 95-124 (LNYS…MTEE). Cys-64, Cys-67, Cys-70, Cys-74, Cys-104, Cys-107, Cys-110, and Cys-114 together coordinate [4Fe-4S] cluster.

This sequence belongs to the complex I 23 kDa subunit family. In terms of assembly, NDH is composed of at least 16 different subunits, 5 of which are encoded in the nucleus. [4Fe-4S] cluster is required as a cofactor.

It localises to the plastid. It is found in the chloroplast thylakoid membrane. It catalyses the reaction a plastoquinone + NADH + (n+1) H(+)(in) = a plastoquinol + NAD(+) + n H(+)(out). The catalysed reaction is a plastoquinone + NADPH + (n+1) H(+)(in) = a plastoquinol + NADP(+) + n H(+)(out). NDH shuttles electrons from NAD(P)H:plastoquinone, via FMN and iron-sulfur (Fe-S) centers, to quinones in the photosynthetic chain and possibly in a chloroplast respiratory chain. The immediate electron acceptor for the enzyme in this species is believed to be plastoquinone. Couples the redox reaction to proton translocation, and thus conserves the redox energy in a proton gradient. This Nandina domestica (Heavenly bamboo) protein is NAD(P)H-quinone oxidoreductase subunit I, chloroplastic.